The sequence spans 464 residues: Chromosomal replication initiator protein DnaA (464 aa).

Positions 1-82 (MSLSLWQQCL…LLRFEVGSKP (82 aa)) are domain I, interacts with DnaA modulators. Residues 82 to 127 (PITQVISQTVTASVSSAPAAPAARTAAPSRPSWDNAAAQPELSYRS) are domain II. Low complexity predominate over residues 98–113 (APAAPAARTAAPSRPS). The disordered stretch occupies residues 98–117 (APAAPAARTAAPSRPSWDNA). The segment at 128-344 (NVNPKHTFDN…GALNRVIANA (217 aa)) is domain III, AAA+ region. Residues G172, G174, K175, and T176 each contribute to the ATP site. A domain IV, binds dsDNA region spans residues 345-464 (NFTGRAITID…FSNLIRTLSS (120 aa)).

Belongs to the DnaA family. Oligomerizes as a right-handed, spiral filament on DNA at oriC.

The protein localises to the cytoplasm. Functionally, plays an important role in the initiation and regulation of chromosomal replication. Binds to the origin of replication; it binds specifically double-stranded DNA at a 9 bp consensus (dnaA box): 5'-TTATC[CA]A[CA]A-3'. DnaA binds to ATP and to acidic phospholipids. DnaA can inhibit its own gene expression as well as that of other genes. Plays an essential role in the initiation and regulation of chromosomal replication. ATP-DnaA binds to the origin of replication (oriC) to initiate formation of the DNA replication initiation complex once per cell cycle. Binds the DnaA box (a 9 base pair repeat at the origin) and separates the double-stranded (ds)DNA. Forms a right-handed helical filament on oriC DNA; dsDNA binds to the exterior of the filament while single-stranded (ss)DNA is stabiized in the filament's interior. The ATP-DnaA-oriC complex binds and stabilizes one strand of the AT-rich DNA unwinding element (DUE), permitting loading of DNA polymerase. After initiation quickly degrades to an ADP-DnaA complex that is not apt for DNA replication. Binds acidic phospholipids. The polypeptide is Chromosomal replication initiator protein DnaA (Serratia marcescens).